The primary structure comprises 256 residues: Ribonuclease 3 (256 aa).

An RNase III domain is found at Leu-3 to Gly-125. Glu-38 provides a ligand contact to Mg(2+). Asp-42 is a catalytic residue. Residues Asp-111 and Glu-114 each contribute to the Mg(2+) site. Glu-114 is a catalytic residue. Positions Asp-152–Arg-222 constitute a DRBM domain. The interval Leu-227–Glu-256 is disordered.

Belongs to the ribonuclease III family. In terms of assembly, homodimer. Requires Mg(2+) as cofactor.

The protein resides in the cytoplasm. It catalyses the reaction Endonucleolytic cleavage to 5'-phosphomonoester.. Functionally, digests double-stranded RNA. Involved in the processing of primary rRNA transcript to yield the immediate precursors to the large and small rRNAs (23S and 16S). Processes some mRNAs, and tRNAs when they are encoded in the rRNA operon. Processes pre-crRNA and tracrRNA of type II CRISPR loci if present in the organism. This chain is Ribonuclease 3, found in Ralstonia nicotianae (strain ATCC BAA-1114 / GMI1000) (Ralstonia solanacearum).